Reading from the N-terminus, the 427-residue chain is UDP-N-acetylglucosamine 1-carboxyvinyltransferase (427 aa).

Phosphoenolpyruvate is bound at residue lysine 22 to asparagine 23. Residue arginine 92 coordinates UDP-N-acetyl-alpha-D-glucosamine. Aspartate 116 functions as the Proton donor in the catalytic mechanism. Aspartate 312 and methionine 334 together coordinate UDP-N-acetyl-alpha-D-glucosamine.

This sequence belongs to the EPSP synthase family. MurA subfamily.

It is found in the cytoplasm. The catalysed reaction is phosphoenolpyruvate + UDP-N-acetyl-alpha-D-glucosamine = UDP-N-acetyl-3-O-(1-carboxyvinyl)-alpha-D-glucosamine + phosphate. The protein operates within cell wall biogenesis; peptidoglycan biosynthesis. Functionally, cell wall formation. Adds enolpyruvyl to UDP-N-acetylglucosamine. In Borreliella burgdorferi (strain ATCC 35210 / DSM 4680 / CIP 102532 / B31) (Borrelia burgdorferi), this protein is UDP-N-acetylglucosamine 1-carboxyvinyltransferase.